We begin with the raw amino-acid sequence, 317 residues long: Pyridoxal 5'-phosphate synthase subunit PdxS (317 aa).

Aspartate 47 serves as a coordination point for D-ribose 5-phosphate. The active-site Schiff-base intermediate with D-ribose 5-phosphate is lysine 104. Glycine 176 provides a ligand contact to D-ribose 5-phosphate. Arginine 188 lines the D-glyceraldehyde 3-phosphate pocket. Residues glycine 237 and 258–259 contribute to the D-ribose 5-phosphate site; that span reads GS.

This sequence belongs to the PdxS/SNZ family. In the presence of PdxT, forms a dodecamer of heterodimers.

The catalysed reaction is aldehydo-D-ribose 5-phosphate + D-glyceraldehyde 3-phosphate + L-glutamine = pyridoxal 5'-phosphate + L-glutamate + phosphate + 3 H2O + H(+). It functions in the pathway cofactor biosynthesis; pyridoxal 5'-phosphate biosynthesis. Its function is as follows. Catalyzes the formation of pyridoxal 5'-phosphate from ribose 5-phosphate (RBP), glyceraldehyde 3-phosphate (G3P) and ammonia. The ammonia is provided by the PdxT subunit. Can also use ribulose 5-phosphate and dihydroxyacetone phosphate as substrates, resulting from enzyme-catalyzed isomerization of RBP and G3P, respectively. This is Pyridoxal 5'-phosphate synthase subunit PdxS from Corynebacterium glutamicum (strain ATCC 13032 / DSM 20300 / JCM 1318 / BCRC 11384 / CCUG 27702 / LMG 3730 / NBRC 12168 / NCIMB 10025 / NRRL B-2784 / 534).